Here is a 192-residue protein sequence, read N- to C-terminus: Elongation factor P (192 aa).

Belongs to the elongation factor P family.

The protein localises to the cytoplasm. Its pathway is protein biosynthesis; polypeptide chain elongation. In terms of biological role, involved in peptide bond synthesis. Stimulates efficient translation and peptide-bond synthesis on native or reconstituted 70S ribosomes in vitro. Probably functions indirectly by altering the affinity of the ribosome for aminoacyl-tRNA, thus increasing their reactivity as acceptors for peptidyl transferase. The chain is Elongation factor P from Borrelia duttonii (strain Ly).